Here is a 172-residue protein sequence, read N- to C-terminus: Large ribosomal subunit protein uL5 (172 aa).

The protein belongs to the universal ribosomal protein uL5 family. As to quaternary structure, component of the large ribosomal subunit.

The protein resides in the nucleus. Its subcellular location is the cytoplasm. Functionally, component of the ribosome, a large ribonucleoprotein complex responsible for the synthesis of proteins in the cell. The small ribosomal subunit (SSU) binds messenger RNAs (mRNAs) and translates the encoded message by selecting cognate aminoacyl-transfer RNA (tRNA) molecules. The large subunit (LSU) contains the ribosomal catalytic site termed the peptidyl transferase center (PTC), which catalyzes the formation of peptide bonds, thereby polymerizing the amino acids delivered by tRNAs into a polypeptide chain. The nascent polypeptides leave the ribosome through a tunnel in the LSU and interact with protein factors that function in enzymatic processing, targeting, and the membrane insertion of nascent chains at the exit of the ribosomal tunnel. This is Large ribosomal subunit protein uL5 (RPL11) from Tetrahymena thermophila.